Consider the following 418-residue polypeptide: NADH-quinone oxidoreductase subunit D (418 aa).

Belongs to the complex I 49 kDa subunit family. As to quaternary structure, NDH-1 is composed of 14 different subunits. Subunits NuoB, C, D, E, F, and G constitute the peripheral sector of the complex.

The protein resides in the cell inner membrane. It carries out the reaction a quinone + NADH + 5 H(+)(in) = a quinol + NAD(+) + 4 H(+)(out). NDH-1 shuttles electrons from NADH, via FMN and iron-sulfur (Fe-S) centers, to quinones in the respiratory chain. The immediate electron acceptor for the enzyme in this species is believed to be ubiquinone. Couples the redox reaction to proton translocation (for every two electrons transferred, four hydrogen ions are translocated across the cytoplasmic membrane), and thus conserves the redox energy in a proton gradient. This chain is NADH-quinone oxidoreductase subunit D, found in Bordetella pertussis (strain Tohama I / ATCC BAA-589 / NCTC 13251).